We begin with the raw amino-acid sequence, 254 residues long: MRLIASDLRSGVERLGDMIAEAKTIVPFTGAGISTECGIPDFRSPGGIWTRNRPIPFDGFVASQEARDESWRRRFAMEETFAAARPGRGHRALASLYRAGKVPAVITQNIDNLHQASGFAHEHVIELHGNTTYARCVGCGQTYQLDWVKRRFDQDGAPNCTVCDEPVKTATISFGQMMPEEEMQRATALSRACDLFIAIGSSLVVWPAAGFPMMAKRAGARLVIINREPTEQDDIADLVIRHDIGETLGPFVGN.

A Deacetylase sirtuin-type domain is found at 5-254 (ASDLRSGVER…GETLGPFVGN (250 aa)). Ala31, Thr35, Phe42, Arg43, Gln108, Ile110, Asp111, and His128 together coordinate NAD(+). Residue Phe42 participates in nicotinamide binding. 2 residues coordinate nicotinamide: Ile110 and Asp111. His128 (proton acceptor) is an active-site residue. 4 residues coordinate Zn(2+): Cys136, Cys139, Cys160, and Cys163. NAD(+) contacts are provided by Ser201, Ser202, Asn226, Asp243, and Ile244.

This sequence belongs to the sirtuin family. Class U subfamily. Zn(2+) is required as a cofactor.

The protein resides in the cytoplasm. The enzyme catalyses N(6)-acetyl-L-lysyl-[protein] + NAD(+) + H2O = 2''-O-acetyl-ADP-D-ribose + nicotinamide + L-lysyl-[protein]. NAD-dependent protein deacetylase which modulates the activities of several enzymes which are inactive in their acetylated form. This Bradyrhizobium diazoefficiens (strain JCM 10833 / BCRC 13528 / IAM 13628 / NBRC 14792 / USDA 110) protein is NAD-dependent protein deacetylase 1.